Reading from the N-terminus, the 577-residue chain is Protein NRT1/ PTR FAMILY 6.2 (577 aa).

12 helical membrane passes run 28–48 (WITA…TMGI), 74–94 (FMGT…SFLG), 96–116 (FKTI…LAVA), 134–154 (IPAT…IALG), 183–203 (FFFN…VTVL), 214–234 (WAYG…LCGT), 332–352 (LLPI…MITF), 369–389 (IPAG…LAVY), 409–429 (LQRI…AALV), 447–467 (ISVF…AFIY), 488–508 (GLFL…VSIV), and 535–555 (WLLV…ALWF).

This sequence belongs to the major facilitator superfamily. Proton-dependent oligopeptide transporter (POT/PTR) (TC 2.A.17) family. In terms of tissue distribution, expressed in shoots, leaves, flowers and siliques. Expressed in leaf petiole.

It is found in the membrane. Functionally, low-affinity proton-dependent nitrate transporter. Not involved in dipeptides transport. In Arabidopsis thaliana (Mouse-ear cress), this protein is Protein NRT1/ PTR FAMILY 6.2 (NPF6.2).